We begin with the raw amino-acid sequence, 562 residues long: Zinc finger protein 579 (562 aa).

Pro residues predominate over residues 1-11; it reads MDPQPPPPAQG. The disordered stretch occupies residues 1–45; that stretch reads MDPQPPPPAQGSPPHRDRGRGRGRGRGRGRGRGRGRGGAGAPRAP. Basic residues predominate over residues 17-35; sequence DRGRGRGRGRGRGRGRGRG. C2H2-type zinc fingers lie at residues 46-68, 74-96, and 102-125; these read LPCP…RLSH, HACP…LRGH, and LRCA…AQEH. An Omega-N-methylarginine modification is found at R94. Disordered stretches follow at residues 120–154 and 166–199; these read HLAQ…EGVE and EEAT…AEAG. Positions 187 to 197 are enriched in basic and acidic residues; it reads DPRESEAKEAE. Phosphoserine is present on S191. 2 C2H2-type zinc fingers span residues 267–289 and 295–317; these read HQCS…RLVH and FVCP…RRVH. The disordered stretch occupies residues 321-377; that stretch reads SLLAPLPGAGKKDDKASGGRNSGKGPEGGEGAECGGASEGGEGGHNGGDATPARPPA. Residues 340–367 are compositionally biased toward gly residues; sequence RNSGKGPEGGEGAECGGASEGGEGGHNG. 3 consecutive C2H2-type zinc fingers follow at residues 382–404, 410–432, and 439–461; these read FWCP…GVTH, FQCV…AQVH, and HPCP…QRCH. S486 bears the Phosphoserine mark. The interval 505–530 is disordered; sequence AHIKEEPPSPGTPPQSPPAPPVFLSA. Over residues 512–525 the composition is skewed to pro residues; the sequence is PSPGTPPQSPPAPP.

Belongs to the krueppel C2H2-type zinc-finger protein family.

It localises to the nucleus. In terms of biological role, may be involved in transcriptional regulation. This Mus musculus (Mouse) protein is Zinc finger protein 579 (Znf579).